Reading from the N-terminus, the 273-residue chain is Formamidopyrimidine-DNA glycosylase (273 aa).

Pro2 serves as the catalytic Schiff-base intermediate with DNA. Catalysis depends on Glu3, which acts as the Proton donor. The active-site Proton donor; for beta-elimination activity is the Lys58. His91, Arg110, and Arg153 together coordinate DNA. The FPG-type zinc-finger motif lies at 238–272; that stretch reads KVYGKEGQPCPRCGEDFVKIKICGRGTTYCLHCQK. Residue Arg262 is the Proton donor; for delta-elimination activity of the active site.

It belongs to the FPG family. As to quaternary structure, monomer. The cofactor is Zn(2+).

The enzyme catalyses Hydrolysis of DNA containing ring-opened 7-methylguanine residues, releasing 2,6-diamino-4-hydroxy-5-(N-methyl)formamidopyrimidine.. It catalyses the reaction 2'-deoxyribonucleotide-(2'-deoxyribose 5'-phosphate)-2'-deoxyribonucleotide-DNA = a 3'-end 2'-deoxyribonucleotide-(2,3-dehydro-2,3-deoxyribose 5'-phosphate)-DNA + a 5'-end 5'-phospho-2'-deoxyribonucleoside-DNA + H(+). Functionally, involved in base excision repair of DNA damaged by oxidation or by mutagenic agents. Acts as a DNA glycosylase that recognizes and removes damaged bases. Has a preference for oxidized purines, such as 7,8-dihydro-8-oxoguanine (8-oxoG). Has AP (apurinic/apyrimidinic) lyase activity and introduces nicks in the DNA strand. Cleaves the DNA backbone by beta-delta elimination to generate a single-strand break at the site of the removed base with both 3'- and 5'-phosphates. The polypeptide is Formamidopyrimidine-DNA glycosylase (Lactobacillus delbrueckii subsp. bulgaricus (strain ATCC BAA-365 / Lb-18)).